The sequence spans 328 residues: GMP reductase (328 aa).

The active-site Thioimidate intermediate is the Cys176. An NADP(+)-binding site is contributed by 205–228; sequence IIADGGIRTHGDIAKSIRFGASMI.

The protein belongs to the IMPDH/GMPR family. GuaC type 2 subfamily.

It carries out the reaction IMP + NH4(+) + NADP(+) = GMP + NADPH + 2 H(+). Catalyzes the irreversible NADPH-dependent deamination of GMP to IMP. It functions in the conversion of nucleobase, nucleoside and nucleotide derivatives of G to A nucleotides, and in maintaining the intracellular balance of A and G nucleotides. This is GMP reductase from Streptococcus pneumoniae serotype 19F (strain G54).